Here is a 290-residue protein sequence, read N- to C-terminus: Small ribosomal subunit protein uS2 (290 aa).

This sequence belongs to the universal ribosomal protein uS2 family. As to quaternary structure, component of the small ribosomal subunit. Mature ribosomes consist of a small (40S) and a large (60S) subunit. The 40S subunit contains about 33 different proteins and 1 molecule of RNA (18S). The 60S subunit contains about 49 different proteins and 3 molecules of RNA (28S, 5.8S and 5S). Interacts with ribosomal protein S21.

It localises to the cytoplasm. Its function is as follows. Required for the assembly and/or stability of the 40S ribosomal subunit. Required for the processing of the 20S rRNA-precursor to mature 18S rRNA in a late step of the maturation of 40S ribosomal subunits. The polypeptide is Small ribosomal subunit protein uS2 (Culex quinquefasciatus (Southern house mosquito)).